Reading from the N-terminus, the 497-residue chain is Virion host shutoff protein (497 aa).

2 disordered regions span residues 122 to 142 (EHDTEFQEDPEENDVSVPPQD) and 280 to 373 (SVIS…SAEA). Over residues 309 to 326 (PNERRVISWRRQDDHDYD) the composition is skewed to basic and acidic residues. Residues 327 to 344 (SSTEDSDQSDSSEEEEEC) are compositionally biased toward acidic residues.

It belongs to the herpesviridae VHS protein family.

It is found in the virion. Its function is as follows. Minor structural protein that acts as an endoribonuclease during lytic infection. Degrades host mRNAs in the cytoplasm by cutting them at preferred sites, including some in regions of translation initiation. This Equine herpesvirus 1 (strain Ab4p) (EHV-1) protein is Virion host shutoff protein.